A 953-amino-acid polypeptide reads, in one-letter code: Translation initiation factor IF-2 (953 aa).

Disordered stretches follow at residues 48–240 and 279–363; these read SSFS…AQQE and TKLK…TERK. Basic and acidic residues-rich tracts occupy residues 80-89, 98-111, and 140-188; these read TGSEHVEKTQ, FKAE…EQAA, and QGDK…ENHK. Positions 191–207 are enriched in polar residues; that stretch reads RFTNQKKQGRQEPQSKS. Over residues 229 to 240 the composition is skewed to basic and acidic residues; sequence RQSETRFRAQQE. Positions 282-291 are enriched in polar residues; that stretch reads KSSNISAKST. Positions 300-317 are enriched in basic and acidic residues; it reads ARPEKNRELTHHSQEGQK. Residues 322–338 show a composition bias toward low complexity; sequence SWNSQNQVRNQKNSNWN. The segment covering 339–348 has biased composition (basic residues); the sequence is KNKKTKKGKN. Residues 454 to 623 form the tr-type G domain; sequence ERAPVVTIMG…LLVAEVEELK (170 aa). Positions 463 to 470 are G1; it reads GHVDHGKT. 463–470 is a binding site for GTP; it reads GHVDHGKT. The tract at residues 488-492 is G2; sequence GITQH. Residues 509 to 512 are G3; that stretch reads DTPG. GTP is bound by residues 509–513 and 563–566; these read DTPGH and NKID. The G4 stretch occupies residues 563 to 566; the sequence is NKID. The interval 599-601 is G5; that stretch reads SAK.

The protein belongs to the TRAFAC class translation factor GTPase superfamily. Classic translation factor GTPase family. IF-2 subfamily.

It is found in the cytoplasm. In terms of biological role, one of the essential components for the initiation of protein synthesis. Protects formylmethionyl-tRNA from spontaneous hydrolysis and promotes its binding to the 30S ribosomal subunits. Also involved in the hydrolysis of GTP during the formation of the 70S ribosomal complex. This Streptococcus pyogenes serotype M1 protein is Translation initiation factor IF-2.